The sequence spans 69 residues: Large ribosomal subunit protein uL29 (69 aa).

Belongs to the universal ribosomal protein uL29 family.

In Thermoanaerobacter pseudethanolicus (strain ATCC 33223 / 39E) (Clostridium thermohydrosulfuricum), this protein is Large ribosomal subunit protein uL29.